Here is a 520-residue protein sequence, read N- to C-terminus: 2-isopropylmalate synthase (520 aa).

The 263-residue stretch at 4 to 266 (VEFLDTTLRD…TSDIVLNETV (263 aa)) folds into the Pyruvate carboxyltransferase domain. Asp13, His201, His203, and Asn237 together coordinate Mn(2+). The regulatory domain stretch occupies residues 390–520 (HFGDLKLTSN…AVSFRDVPTN (131 aa)).

The protein belongs to the alpha-IPM synthase/homocitrate synthase family. LeuA type 1 subfamily. As to quaternary structure, homodimer. The cofactor is Mn(2+).

The protein resides in the cytoplasm. The catalysed reaction is 3-methyl-2-oxobutanoate + acetyl-CoA + H2O = (2S)-2-isopropylmalate + CoA + H(+). It functions in the pathway amino-acid biosynthesis; L-leucine biosynthesis; L-leucine from 3-methyl-2-oxobutanoate: step 1/4. In terms of biological role, catalyzes the condensation of the acetyl group of acetyl-CoA with 3-methyl-2-oxobutanoate (2-ketoisovalerate) to form 3-carboxy-3-hydroxy-4-methylpentanoate (2-isopropylmalate). This Streptococcus gallolyticus (strain UCN34) protein is 2-isopropylmalate synthase.